Reading from the N-terminus, the 360-residue chain is DNA replication and repair protein RecF (360 aa).

30-37 (GANGSGKT) is a binding site for ATP.

It belongs to the RecF family.

It localises to the cytoplasm. The RecF protein is involved in DNA metabolism; it is required for DNA replication and normal SOS inducibility. RecF binds preferentially to single-stranded, linear DNA. It also seems to bind ATP. This chain is DNA replication and repair protein RecF, found in Acinetobacter baumannii (strain ATCC 17978 / DSM 105126 / CIP 53.77 / LMG 1025 / NCDC KC755 / 5377).